Reading from the N-terminus, the 519-residue chain is Protein nucleotidyltransferase YdiU (519 aa).

Residues G100, G102, R103, K123, D135, G136, R193, and R200 each coordinate ATP. The active-site Proton acceptor is the D270. N271 and D280 together coordinate Mg(2+). D280 provides a ligand contact to ATP.

It belongs to the SELO family. The cofactor is Mg(2+). It depends on Mn(2+) as a cofactor.

It catalyses the reaction L-seryl-[protein] + ATP = 3-O-(5'-adenylyl)-L-seryl-[protein] + diphosphate. It carries out the reaction L-threonyl-[protein] + ATP = 3-O-(5'-adenylyl)-L-threonyl-[protein] + diphosphate. The catalysed reaction is L-tyrosyl-[protein] + ATP = O-(5'-adenylyl)-L-tyrosyl-[protein] + diphosphate. The enzyme catalyses L-histidyl-[protein] + UTP = N(tele)-(5'-uridylyl)-L-histidyl-[protein] + diphosphate. It catalyses the reaction L-seryl-[protein] + UTP = O-(5'-uridylyl)-L-seryl-[protein] + diphosphate. It carries out the reaction L-tyrosyl-[protein] + UTP = O-(5'-uridylyl)-L-tyrosyl-[protein] + diphosphate. In terms of biological role, nucleotidyltransferase involved in the post-translational modification of proteins. It can catalyze the addition of adenosine monophosphate (AMP) or uridine monophosphate (UMP) to a protein, resulting in modifications known as AMPylation and UMPylation. The sequence is that of Protein nucleotidyltransferase YdiU from Xylella fastidiosa (strain 9a5c).